The sequence spans 129 residues: Large ribosomal subunit protein uL22 (129 aa).

This sequence belongs to the universal ribosomal protein uL22 family. As to quaternary structure, part of the 50S ribosomal subunit.

In terms of biological role, this protein binds specifically to 23S rRNA; its binding is stimulated by other ribosomal proteins, e.g. L4, L17, and L20. It is important during the early stages of 50S assembly. It makes multiple contacts with different domains of the 23S rRNA in the assembled 50S subunit and ribosome. Functionally, the globular domain of the protein is located near the polypeptide exit tunnel on the outside of the subunit, while an extended beta-hairpin is found that lines the wall of the exit tunnel in the center of the 70S ribosome. In Onion yellows phytoplasma (strain OY-M), this protein is Large ribosomal subunit protein uL22.